The sequence spans 818 residues: Phenylalanine--tRNA ligase beta subunit (818 aa).

The region spanning 39-148 is the tRNA-binding domain; sequence AAELQKFEVA…EDAVVGENFT (110 aa). The B5 domain maps to 423 to 498; sequence SQKKPLDFSA…RIYGYDKIES (76 aa). Mg(2+)-binding residues include D476, D482, E485, and E486. The FDX-ACB domain occupies 724–817; that stretch reads SDFQANFRDY…ISQKFQGTLR (94 aa).

Belongs to the phenylalanyl-tRNA synthetase beta subunit family. Type 1 subfamily. Tetramer of two alpha and two beta subunits. The cofactor is Mg(2+).

It is found in the cytoplasm. The enzyme catalyses tRNA(Phe) + L-phenylalanine + ATP = L-phenylalanyl-tRNA(Phe) + AMP + diphosphate + H(+). In Rickettsia conorii (strain ATCC VR-613 / Malish 7), this protein is Phenylalanine--tRNA ligase beta subunit.